A 116-amino-acid chain; its full sequence is M-zodatoxin-Lt6a/b (116 aa).

The N-terminal stretch at 1–22 is a signal peptide; it reads MKYFVVALTLAVAFVCIEECKT. 2 propeptides span residues 23 to 44 and 80 to 83; these read VEIGYAVSEDFDQNEIDNEEAR and EEAR. 2 short sequence motifs (processing quadruplet motif) span residues 41-44 and 80-83; these read EEAR. Position 84 is a pyrrolidone carboxylic acid (Gln-84).

Belongs to the cationic peptide 03 (latarcin) family. 06 subfamily. Cleavage of the propeptide depends on the processing quadruplet motif (XXXR, with at least one of X being E). In terms of tissue distribution, expressed by the venom gland.

It localises to the secreted. Functionally, does not have antimicrobial activity against neither Gram-positive bacteria (A.globiformis VKM Ac-1112 (MIC&gt;70 uM), and B.subtilis VKM B-501 (MIC&gt;70 uM)), nor Gram-negative bacteria (E.coli DH5-alpha (MIC&gt;70 uM), E.coli MH1 (MIC&gt;70 uM), and P.aeruginosa PAO1 (MIC&gt;70 uM)), nor yeasts (P.pastoris GS115 (MIC&gt;70 uM), and S.cerevisiae Y190 (MIC&gt;70 uM)). Does not have hemolytic activity against rabbit erythrocytes. However, it causes some conductance changes in planar bilayer membranes, without membrane rupture, suggesting a cytolytic function on other biological targets. It causes paralysis, but is not lethal when injected into insect (M.domestica) larvae. The polypeptide is M-zodatoxin-Lt6a/b (Lachesana tarabaevi (Spider)).